The chain runs to 109 residues: V-type proton ATPase 16 kDa proteolipid subunit (109 aa).

The helical transmembrane segment at 1–20 threads the bilayer; the sequence is VPVVMAGVLGIYGLIIAVII. At 21-39 the chain is on the lumenal side; sequence STGINPKAKPYYLFDGYAH. The chain crosses the membrane as a helical span at residues 40–61; the sequence is LSSGLACGLAGLAAGMAIGIVG. Over 62 to 73 the chain is Cytoplasmic; the sequence is DAGVRANAQQPK. The chain crosses the membrane as a helical span at residues 74–99; it reads LFVGMILILIFAEALALYGLIVGIIL. The Lumenal portion of the chain corresponds to 100 to 109; that stretch reads SSRAGQSRAD.

This sequence belongs to the V-ATPase proteolipid subunit family. V-ATPase is a heteromultimeric enzyme composed of a peripheral catalytic V1 complex (main components: subunits A, B, C, D, E, and F) attached to an integral membrane V0 proton pore complex (main component: the proteolipid protein; which is present as a hexamer that forms the proton-conducting pore). High expression in the mesocotyl tip of etiolated seedlings compared to the base.

The protein localises to the vacuole membrane. Functionally, proton-conducting pore forming subunit of the membrane integral V0 complex of vacuolar ATPase. V-ATPase is responsible for acidifying a variety of intracellular compartments in eukaryotic cells. This is V-type proton ATPase 16 kDa proteolipid subunit from Zea mays (Maize).